Here is a 69-residue protein sequence, read N- to C-terminus: MFGKLGMPELVLIFAVALVIFGPSKLPEIGKSLGKSIKEFKKFSKEMKDDLSLEERETKDKDTVKVKEE.

Residues 1–21 traverse the membrane as a helical segment; it reads MFGKLGMPELVLIFAVALVIF.

The protein belongs to the TatA/E family. In terms of assembly, forms a complex with TatC.

The protein resides in the cell membrane. Functionally, part of the twin-arginine translocation (Tat) system that transports large folded proteins containing a characteristic twin-arginine motif in their signal peptide across membranes. TatA could form the protein-conducting channel of the Tat system. The sequence is that of Sec-independent protein translocase protein TatA from Alkaliphilus metalliredigens (strain QYMF).